We begin with the raw amino-acid sequence, 52 residues long: Insulin-2 (52 aa).

3 cysteine pairs are disulfide-bonded: C7-C38, C19-C51, and C37-C42.

Belongs to the insulin family. Heterodimer of a B chain and an A chain linked by two disulfide bonds.

The protein resides in the secreted. In terms of biological role, insulin decreases blood glucose concentration. It increases cell permeability to monosaccharides, amino acids and fatty acids. It accelerates glycolysis, the pentose phosphate cycle, and glycogen synthesis in liver. This chain is Insulin-2, found in Huso dauricus (Kaluga sturgeon).